The primary structure comprises 364 residues: Bifunctional protein Rv2228c (364 aa).

Residues 1 to 139 form the RNase H type-1 domain; that stretch reads MKVVIEADGG…MDAAAQSAAA (139 aa). 4 residues coordinate Mg(2+): Asp8, Glu49, Asp73, and Asp123. The Tele-phosphohistidine intermediate role is filled by His172. Glu246 (proton donor/acceptor; for phosphatase activity) is an active-site residue.

This sequence in the N-terminal section; belongs to the RNase H family. In the C-terminal section; belongs to the histidine phosphatase superfamily. As to quaternary structure, the N-terminal domain alone is monomeric in solution but associates in the crystal to form a dimer. It depends on Mg(2+) as a cofactor.

It catalyses the reaction Endonucleolytic cleavage to 5'-phosphomonoester.. It carries out the reaction adenosylcob(III)alamin 5'-phosphate + H2O = adenosylcob(III)alamin + phosphate. The enzyme catalyses alpha-ribazole 5'-phosphate + H2O = alpha-ribazole + phosphate. It functions in the pathway nucleoside biosynthesis; alpha-ribazole biosynthesis; alpha-ribazole from 5,6-dimethylbenzimidazole: step 2/2. In terms of biological role, endonuclease that displays both RNase H activity with a hybrid RNA/DNA substrate as well as double-stranded RNase activity. As the only authenticated RNase HI in M.tuberculosis, probably plays an important role in the physiology of this organism, being likely involved in bacterial replication. Functionally, catalyzes the hydrolysis of the phospho group from alpha-ribazole 5'-phosphate to form alpha-ribazole. May also catalyze the conversion of adenosylcobalamin 5'-phosphate to adenosylcobalamin (vitamin B12). Has a possible role in B12 recycling, but the primary role of the C-terminal domain of this phosphatase enzyme could be phosphate generation to help bacterial survival within the macrophage, which is a phosphate-deprived environment. The chain is Bifunctional protein Rv2228c from Mycobacterium tuberculosis (strain ATCC 25618 / H37Rv).